Here is a 109-residue protein sequence, read N- to C-terminus: Ferredoxin (109 aa).

2 4Fe-4S ferredoxin-type domains span residues 2 to 30 (TYVV…YEGE) and 31 to 60 (FMLV…PESP). [3Fe-4S] cluster is bound by residues C9 and C17. The [4Fe-4S] cluster site is built by C21, C40, C43, and C46. Residue C50 coordinates [3Fe-4S] cluster.

[4Fe-4S] cluster serves as cofactor. The cofactor is [3Fe-4S] cluster.

In terms of biological role, ferredoxins are iron-sulfur proteins that transfer electrons in a wide variety of metabolic reactions. This chain is Ferredoxin (fdxA), found in Rickettsia prowazekii (strain Madrid E).